Reading from the N-terminus, the 517-residue chain is Crotonobetaine/carnitine--CoA ligase (517 aa).

This sequence belongs to the ATP-dependent AMP-binding enzyme family.

It catalyses the reaction 4-(trimethylamino)butanoate + ATP + CoA = 4-(trimethylamino)butanoyl-CoA + AMP + diphosphate. The enzyme catalyses crotonobetaine + ATP + CoA = crotonobetainyl-CoA + AMP + diphosphate. It carries out the reaction (R)-carnitine + ATP + CoA = (R)-carnitinyl-CoA + AMP + diphosphate. It functions in the pathway amine and polyamine metabolism; carnitine metabolism. Its function is as follows. Catalyzes the transfer of CoA to carnitine, generating the initial carnitinyl-CoA needed for the CaiB reaction cycle. Also has activity toward crotonobetaine and gamma-butyrobetaine. The chain is Crotonobetaine/carnitine--CoA ligase from Escherichia coli O8 (strain IAI1).